The following is a 100-amino-acid chain: NADH-quinone oxidoreductase subunit K (100 aa).

3 helical membrane-spanning segments follow: residues 4-24 (LQHG…CLVL), 28-48 (LLFM…AFVV), and 60-80 (IMYI…LALL).

Belongs to the complex I subunit 4L family. In terms of assembly, NDH-1 is composed of 13 different subunits. Subunits NuoA, H, J, K, L, M, N constitute the membrane sector of the complex.

Its subcellular location is the cell inner membrane. The enzyme catalyses a quinone + NADH + 5 H(+)(in) = a quinol + NAD(+) + 4 H(+)(out). Functionally, NDH-1 shuttles electrons from NADH, via FMN and iron-sulfur (Fe-S) centers, to quinones in the respiratory chain. The immediate electron acceptor for the enzyme in this species is believed to be ubiquinone. Couples the redox reaction to proton translocation (for every two electrons transferred, four hydrogen ions are translocated across the cytoplasmic membrane), and thus conserves the redox energy in a proton gradient. This Proteus mirabilis (strain HI4320) protein is NADH-quinone oxidoreductase subunit K.